The sequence spans 169 residues: Peptide methionine sulfoxide reductase MsrA (169 aa).

The active site involves Cys-10.

The protein belongs to the MsrA Met sulfoxide reductase family.

The enzyme catalyses L-methionyl-[protein] + [thioredoxin]-disulfide + H2O = L-methionyl-(S)-S-oxide-[protein] + [thioredoxin]-dithiol. It carries out the reaction [thioredoxin]-disulfide + L-methionine + H2O = L-methionine (S)-S-oxide + [thioredoxin]-dithiol. Has an important function as a repair enzyme for proteins that have been inactivated by oxidation. Catalyzes the reversible oxidation-reduction of methionine sulfoxide in proteins to methionine. In Streptococcus uberis (strain ATCC BAA-854 / 0140J), this protein is Peptide methionine sulfoxide reductase MsrA.